The chain runs to 86 residues: Putative regulatory protein Desal_2819 (86 aa).

This sequence belongs to the RemA family.

In Maridesulfovibrio salexigens (strain ATCC 14822 / DSM 2638 / NCIMB 8403 / VKM B-1763) (Desulfovibrio salexigens), this protein is Putative regulatory protein Desal_2819.